A 439-amino-acid chain; its full sequence is Trigger factor (439 aa).

The region spanning Gly163–Pro248 is the PPIase FKBP-type domain.

Belongs to the FKBP-type PPIase family. Tig subfamily.

The protein resides in the cytoplasm. It carries out the reaction [protein]-peptidylproline (omega=180) = [protein]-peptidylproline (omega=0). In terms of biological role, involved in protein export. Acts as a chaperone by maintaining the newly synthesized protein in an open conformation. Functions as a peptidyl-prolyl cis-trans isomerase. The chain is Trigger factor from Nitrosomonas europaea (strain ATCC 19718 / CIP 103999 / KCTC 2705 / NBRC 14298).